A 773-amino-acid chain; its full sequence is E3 ubiquitin-protein ligase msl-2 (773 aa).

Residues Cys-41, Cys-44, Cys-59, His-61, Cys-64, Cys-67, Cys-78, and Cys-84 each contribute to the Zn(2+) site. The RING-type zinc-finger motif lies at Cys-41–Ser-85. The stretch at Val-424–Asp-468 forms a coiled coil. The segment at Ala-460–Cys-525 is disordered. The 52-residue stretch at Pro-520–Glu-571 folds into the CXC MSL2-type domain. Zn(2+) is bound by residues Cys-525, Cys-527, Cys-539, Cys-544, Cys-546, Cys-553, Cys-556, Cys-558, and Cys-561. The C-terminal disordered region (CTD) stretch occupies residues Glu-571–Leu-773. A compositionally biased stretch (acidic residues) spans Ser-572–Phe-581. The segment at Ser-572 to Ala-616 is disordered. A clamp-binding domain (CBD) region spans residues Leu-620 to Pro-685. The segment at Gln-650–Glu-708 is pro/Bas region. Residues Ile-687 to Ala-704 are compositionally biased toward pro residues. The interval Ile-687–Leu-773 is disordered. Residues Pro-705–Ala-714 show a composition bias toward basic and acidic residues. The span at Lys-715–Arg-726 shows a compositional bias: basic residues. Polar residues predominate over residues Gly-742–Ala-759.

It belongs to the MSL2 family. Component of the male-specific lethal (MSL) histone acetyltransferase complex, composed of mof, mle, msl-1, msl-2 and msl-3 proteins, as well as roX1 and roX2 non-coding RNAs. When not associated with chromatin, the MSL complex associates with msl-2 mRNAs, possibly to regulate the amount of available MSL complex. Interacts with Clamp; promoting cooperative binding to DNA PionX sites and recruitment of the MSL complex to chromatin. In terms of processing, autoubiquitinated.

The protein localises to the nucleus. Its subcellular location is the chromosome. It catalyses the reaction S-ubiquitinyl-[E2 ubiquitin-conjugating enzyme]-L-cysteine + [acceptor protein]-L-lysine = [E2 ubiquitin-conjugating enzyme]-L-cysteine + N(6)-ubiquitinyl-[acceptor protein]-L-lysine.. The protein operates within protein modification; protein ubiquitination. Limiting component of the male-specific lethal (MSL) histone acetyltransferase complex, a multiprotein complex essential for elevating transcription of the single X chromosome in the male (X chromosome dosage compensation). The MSL complex specifically associates with the single X chromosome in males and mediates formation of H4K16ac, promoting a two-fold activation of X chromosome. Msl-2 is only produced in males, constituting the limiting component of the MSL complex. Within the MSL complex, msl-2 mediates the selective binding to the X chromosome and recruitment of the MSL complex via two different mechanisms. Recognizes DNA motifs that are enriched on X chromosome, named PionX sites, which are characterized by sequence features and distinct DNA conformation (base roll). Specific recognition of the X chromosome is also mediated by the formation of a gel-like state: msl-2 undergoes liquid-liquid phase separation upon binding to roX1 and roX2 non-coding RNAs, leading to nucleate the MSL complex on the X chromosome. Msl-2 is also required for translation and/or stability of msl-1 in males. Also acts as an E3 ubiquitin ligase: in complex with msl-1, mediates ubiquitination of histone H2B at 'Lys-34' (H2BK34Ub). Also catalyzes ubiquitination of msl-1, msl-3 and mof components of the MSL complex. This Drosophila melanogaster (Fruit fly) protein is E3 ubiquitin-protein ligase msl-2.